Here is a 251-residue protein sequence, read N- to C-terminus: DNA-directed RNA polymerase III subunit RPC7 (251 aa).

Positions 186–251 are disordered; that stretch reads DDASTGDGAA…EEDPNEEAAF (66 aa). Position 189 is a phosphoserine (Ser189). Composition is skewed to acidic residues over residues 203–225 and 234–251; these read GEDD…DDDY and GDDD…EAAF.

The protein belongs to the eukaryotic RPC7 RNA polymerase subunit family. Component of the RNA polymerase III (Pol III) complex consisting of 17 subunits.

The protein localises to the nucleus. Its function is as follows. DNA-dependent RNA polymerase catalyzes the transcription of DNA into RNA using the four ribonucleoside triphosphates as substrates. Specific peripheric component of RNA polymerase III which synthesizes small RNAs, such as 5S rRNA and tRNAs. C31 is involved in the formation of the initiation complex. The chain is DNA-directed RNA polymerase III subunit RPC7 (RPC31) from Saccharomyces cerevisiae (strain ATCC 204508 / S288c) (Baker's yeast).